A 370-amino-acid polypeptide reads, in one-letter code: Aminomethyltransferase (370 aa).

The protein belongs to the GcvT family. As to quaternary structure, the glycine cleavage system is composed of four proteins: P, T, L and H.

The enzyme catalyses N(6)-[(R)-S(8)-aminomethyldihydrolipoyl]-L-lysyl-[protein] + (6S)-5,6,7,8-tetrahydrofolate = N(6)-[(R)-dihydrolipoyl]-L-lysyl-[protein] + (6R)-5,10-methylene-5,6,7,8-tetrahydrofolate + NH4(+). In terms of biological role, the glycine cleavage system catalyzes the degradation of glycine. The chain is Aminomethyltransferase from Prochlorococcus marinus (strain MIT 9301).